A 257-amino-acid polypeptide reads, in one-letter code: Imidazole glycerol phosphate synthase subunit HisF (257 aa).

Active-site residues include D12 and D131.

This sequence belongs to the HisA/HisF family. Heterodimer of HisH and HisF.

It localises to the cytoplasm. It catalyses the reaction 5-[(5-phospho-1-deoxy-D-ribulos-1-ylimino)methylamino]-1-(5-phospho-beta-D-ribosyl)imidazole-4-carboxamide + L-glutamine = D-erythro-1-(imidazol-4-yl)glycerol 3-phosphate + 5-amino-1-(5-phospho-beta-D-ribosyl)imidazole-4-carboxamide + L-glutamate + H(+). It participates in amino-acid biosynthesis; L-histidine biosynthesis; L-histidine from 5-phospho-alpha-D-ribose 1-diphosphate: step 5/9. Functionally, IGPS catalyzes the conversion of PRFAR and glutamine to IGP, AICAR and glutamate. The HisF subunit catalyzes the cyclization activity that produces IGP and AICAR from PRFAR using the ammonia provided by the HisH subunit. The chain is Imidazole glycerol phosphate synthase subunit HisF from Rhodococcus opacus (strain B4).